The chain runs to 116 residues: Neuropeptide Y receptor type 1 (116 aa).

Residues 1-6 traverse the membrane as a helical segment; sequence LVLIAV. Residues 7 to 24 lie on the Cytoplasmic side of the membrane; that stretch reads ERHQLIINPRGWRPSNRH. A helical membrane pass occupies residues 25-45; the sequence is AYVGIAVIWVLAVASSLPFLI. Topologically, residues 46 to 81 are extracellular; sequence YQVLTDEPFQNVTLDAFKDKYVCFDKFPSDSHRLSY. Residue N56 is glycosylated (N-linked (GlcNAc...) asparagine). Residues 82-102 traverse the membrane as a helical segment; it reads TTLLLVLQYFGPLCFIFICYF. Topologically, residues 103–116 are cytoplasmic; the sequence is KIYIRLKRRNNMMD.

Belongs to the G-protein coupled receptor 1 family.

It is found in the cell membrane. Functionally, receptor for neuropeptide Y and peptide YY. The chain is Neuropeptide Y receptor type 1 (NPY1R) from Ovis aries (Sheep).